The sequence spans 415 residues: Serine hydroxymethyltransferase (415 aa).

(6S)-5,6,7,8-tetrahydrofolate is bound by residues L121 and 125 to 127 (GHL). Position 230 is an N6-(pyridoxal phosphate)lysine (K230). (6S)-5,6,7,8-tetrahydrofolate is bound at residue 355–357 (SPF).

It belongs to the SHMT family. Homodimer. Requires pyridoxal 5'-phosphate as cofactor.

It is found in the cytoplasm. The catalysed reaction is (6R)-5,10-methylene-5,6,7,8-tetrahydrofolate + glycine + H2O = (6S)-5,6,7,8-tetrahydrofolate + L-serine. The protein operates within one-carbon metabolism; tetrahydrofolate interconversion. It participates in amino-acid biosynthesis; glycine biosynthesis; glycine from L-serine: step 1/1. Its function is as follows. Catalyzes the reversible interconversion of serine and glycine with tetrahydrofolate (THF) serving as the one-carbon carrier. This reaction serves as the major source of one-carbon groups required for the biosynthesis of purines, thymidylate, methionine, and other important biomolecules. Also exhibits THF-independent aldolase activity toward beta-hydroxyamino acids, producing glycine and aldehydes, via a retro-aldol mechanism. The chain is Serine hydroxymethyltransferase from Lactococcus lactis subsp. lactis (strain IL1403) (Streptococcus lactis).